The following is a 485-amino-acid chain: CUGBP Elav-like family member 5 (485 aa).

Over residues 1–11 the composition is skewed to basic and acidic residues; it reads MARLTESEARR. The tract at residues 1–40 is disordered; the sequence is MARLTESEARRQQQQLLQPRPSPVGSSGPEPPGGQPDGMK. Positions 12–28 are enriched in low complexity; it reads QQQQLLQPRPSPVGSSG. RRM domains lie at 45–126, 134–214, and 400–478; these read IKLF…PADS, RKLF…FADT, and CNLF…LKRP.

Belongs to the CELF/BRUNOL family. As to expression, expressed in brain.

It is found in the nucleus. The protein resides in the cytoplasm. Functionally, RNA-binding protein implicated in the regulation of pre-mRNA alternative splicing. Mediates exon inclusion and/or exclusion in pre-mRNA that are subject to tissue-specific and developmentally regulated alternative splicing. Specifically activates exon 5 inclusion of cardiac isoforms of TNNT2 during heart remodeling at the juvenile to adult transition. Binds to muscle-specific splicing enhancer (MSE) intronic sites flanking the alternative exon 5 of TNNT2 pre-mRNA. The chain is CUGBP Elav-like family member 5 (CELF5) from Homo sapiens (Human).